The following is a 206-amino-acid chain: Pyridoxine/pyridoxamine 5'-phosphate oxidase (206 aa).

Residues 55-60, 70-71, R76, K77, and Q99 contribute to the FMN site; these read RVVLLK and YT. K60 contributes to the substrate binding site. Positions 117, 121, and 125 each coordinate substrate. Residues 134-135 and W179 each bind FMN; that span reads QS. Residue 185 to 187 coordinates substrate; sequence RLH. R189 serves as a coordination point for FMN.

This sequence belongs to the pyridoxamine 5'-phosphate oxidase family. In terms of assembly, homodimer. It depends on FMN as a cofactor.

It carries out the reaction pyridoxamine 5'-phosphate + O2 + H2O = pyridoxal 5'-phosphate + H2O2 + NH4(+). The enzyme catalyses pyridoxine 5'-phosphate + O2 = pyridoxal 5'-phosphate + H2O2. It participates in cofactor metabolism; pyridoxal 5'-phosphate salvage; pyridoxal 5'-phosphate from pyridoxamine 5'-phosphate: step 1/1. It functions in the pathway cofactor metabolism; pyridoxal 5'-phosphate salvage; pyridoxal 5'-phosphate from pyridoxine 5'-phosphate: step 1/1. Catalyzes the oxidation of either pyridoxine 5'-phosphate (PNP) or pyridoxamine 5'-phosphate (PMP) into pyridoxal 5'-phosphate (PLP). The protein is Pyridoxine/pyridoxamine 5'-phosphate oxidase of Myxococcus xanthus (strain DK1622).